Consider the following 417-residue polypeptide: UPF0597 protein Cphy_1256 (417 aa).

It belongs to the UPF0597 family.

The chain is UPF0597 protein Cphy_1256 from Lachnoclostridium phytofermentans (strain ATCC 700394 / DSM 18823 / ISDg) (Clostridium phytofermentans).